Consider the following 466-residue polypeptide: ATP synthase subunit beta (466 aa).

Position 148–155 (148–155 (GGAGVGKT)) interacts with ATP.

It belongs to the ATPase alpha/beta chains family. In terms of assembly, F-type ATPases have 2 components, CF(1) - the catalytic core - and CF(0) - the membrane proton channel. CF(1) has five subunits: alpha(3), beta(3), gamma(1), delta(1), epsilon(1). CF(0) has three main subunits: a(1), b(2) and c(9-12). The alpha and beta chains form an alternating ring which encloses part of the gamma chain. CF(1) is attached to CF(0) by a central stalk formed by the gamma and epsilon chains, while a peripheral stalk is formed by the delta and b chains.

The protein localises to the cell inner membrane. The catalysed reaction is ATP + H2O + 4 H(+)(in) = ADP + phosphate + 5 H(+)(out). In terms of biological role, produces ATP from ADP in the presence of a proton gradient across the membrane. The catalytic sites are hosted primarily by the beta subunits. The chain is ATP synthase subunit beta from Herminiimonas arsenicoxydans.